A 414-amino-acid chain; its full sequence is Succinylornithine transaminase (414 aa).

The residue at position 260 (lysine 260) is an N6-(pyridoxal phosphate)lysine.

This sequence belongs to the class-III pyridoxal-phosphate-dependent aminotransferase family. AstC subfamily. Pyridoxal 5'-phosphate serves as cofactor.

The enzyme catalyses N(2)-succinyl-L-ornithine + 2-oxoglutarate = N-succinyl-L-glutamate 5-semialdehyde + L-glutamate. It functions in the pathway amino-acid degradation; L-arginine degradation via AST pathway; L-glutamate and succinate from L-arginine: step 3/5. Functionally, catalyzes the transamination of N(2)-succinylornithine and alpha-ketoglutarate into N(2)-succinylglutamate semialdehyde and glutamate. Can also act as an acetylornithine aminotransferase. In Yersinia pseudotuberculosis serotype I (strain IP32953), this protein is Succinylornithine transaminase.